A 303-amino-acid polypeptide reads, in one-letter code: Putative S-adenosyl-L-methionine-dependent methyltransferase Mb1931c (303 aa).

S-adenosyl-L-methionine-binding positions include D129 and 158–159; that span reads DL.

Belongs to the UPF0677 family.

Functionally, exhibits S-adenosyl-L-methionine-dependent methyltransferase activity. The polypeptide is Putative S-adenosyl-L-methionine-dependent methyltransferase Mb1931c (Mycobacterium bovis (strain ATCC BAA-935 / AF2122/97)).